A 92-amino-acid polypeptide reads, in one-letter code: SPbeta prophage-derived uncharacterized protein YopY (92 aa).

The chain is SPbeta prophage-derived uncharacterized protein YopY (yopY) from Bacillus subtilis (strain 168).